The sequence spans 130 residues: Holo-[acyl-carrier-protein] synthase (130 aa).

The Mg(2+) site is built by D9 and E58.

Belongs to the P-Pant transferase superfamily. AcpS family. It depends on Mg(2+) as a cofactor.

Its subcellular location is the cytoplasm. The catalysed reaction is apo-[ACP] + CoA = holo-[ACP] + adenosine 3',5'-bisphosphate + H(+). Transfers the 4'-phosphopantetheine moiety from coenzyme A to a Ser of acyl-carrier-protein. In Mycobacterium leprae (strain Br4923), this protein is Holo-[acyl-carrier-protein] synthase.